Reading from the N-terminus, the 84-residue chain is U21-theraphotoxin-Cg1a 2 (84 aa).

Residues 1 to 21 (MKVSVLITLAVLGVMFLFTSA) form the signal peptide. A propeptide spanning residues 22–47 (EERGSDQMDSPAWLKSMEIIFQSEER) is cleaved from the precursor. Cystine bridges form between cysteine 49–cysteine 63, cysteine 56–cysteine 68, and cysteine 62–cysteine 76. The residue at position 82 (valine 82) is a Valine amide.

It belongs to the neurotoxin 10 (Hwtx-1) family. 05 (F4a) subfamily. As to expression, expressed by the venom gland.

The protein localises to the secreted. Probable ion channel inhibitor. This chain is U21-theraphotoxin-Cg1a 2, found in Chilobrachys guangxiensis (Chinese earth tiger tarantula).